A 163-amino-acid chain; its full sequence is Choriogonadotropin subunit beta (163 aa).

Residues Met1–Ala20 form the signal peptide. Cystine bridges form between Cys29–Cys76, Cys43–Cys91, Cys46–Cys129, Cys54–Cys107, Cys58–Cys109, and Cys112–Cys119. The N-linked (GlcNAc...) asparagine glycan is linked to Asn50. An N-linked (GlcNAc...) asparagine glycan is attached at Asn124. Residues Gln135–Gln151 show a composition bias toward polar residues. The interval Gln135–Gln163 is disordered. O-linked (GalNAc...) serine glycosylation is present at Ser139. Asn145 is a glycosylation site (N-linked (GlcNAc...) asparagine). O-linked (GalNAc...) serine glycosylation is present at Ser150.

This sequence belongs to the glycoprotein hormones subunit beta family. Heterodimer of a common alpha chain and a unique beta chain which confers biological specificity to thyrotropin, lutropin, follitropin and gonadotropin.

Its subcellular location is the secreted. In terms of biological role, stimulates the ovaries to synthesize the steroids that are essential for the maintenance of pregnancy. This Saimiri boliviensis boliviensis (Bolivian squirrel monkey) protein is Choriogonadotropin subunit beta (CGB).